The chain runs to 387 residues: MAQKTTISVIKADIGSLAGHHTVHPDCMAAASRVLAEAKKNGVINDFYVTHVGDDLILIMTHTKGVDHPDVHGLAWEAFKKAAEVAKELGLYAAGQDLLSDAFSGNVRGLGPAAAEMEIEERPSEPIVIFAADKTEPGAFNLPLYKIFADPFNTAGLVIDPRLHDGFVFEVVDVFEDKGVHLNTPEELYDLLALIGTPSRYVIRRVFRKDGKIAAVVSVERLNLIAGKYVGKDDPVMIVRAQSGFPAVGEVLEPFTFPHLVAGWMRGSHNGPLMPVPVRDARPTRFDGPPRVIALGFQVKNAKLVGPSDLFDDPAFDEARRTANKVADYIRRHGPFMPHRLDPSEMEYTTLPQVLERLKDRFKPVKDLPVPKVKHSEMLSGAEEAHD.

D13 functions as the Proton acceptor; for FBP phosphatase activity in the catalytic mechanism. Mg(2+) contacts are provided by D13, H20, D54, and D55. H20 lines the beta-D-fructose 1,6-bisphosphate pocket. H20 is a dihydroxyacetone phosphate binding site. Position 92 (Y92) interacts with beta-D-fructose 1,6-bisphosphate. Q96 lines the Mg(2+) pocket. 105 to 106 lines the beta-D-fructose 1,6-bisphosphate pocket; the sequence is GN. D133 provides a ligand contact to Mg(2+). Beta-D-fructose 1,6-bisphosphate is bound at residue K134. Dihydroxyacetone phosphate is bound at residue K134. The active-site Proton donor/acceptor; for FBP aldolase activity is the Y229. Positions 232, 233, and 234 each coordinate Mg(2+). K232 (schiff-base intermediate with DHAP; for FBP aldolase activity) is an active-site residue. Residues 242–243, R266, D287, and Y348 contribute to the beta-D-fructose 1,6-bisphosphate site; that span reads QS. R266 and D287 together coordinate dihydroxyacetone phosphate.

Belongs to the FBP aldolase/phosphatase family. In terms of assembly, homooctamer; dimer of tetramers. Requires Mg(2+) as cofactor.

It catalyses the reaction beta-D-fructose 1,6-bisphosphate + H2O = beta-D-fructose 6-phosphate + phosphate. The catalysed reaction is beta-D-fructose 1,6-bisphosphate = D-glyceraldehyde 3-phosphate + dihydroxyacetone phosphate. The protein operates within carbohydrate biosynthesis; gluconeogenesis. Catalyzes two subsequent steps in gluconeogenesis: the aldol condensation of dihydroxyacetone phosphate (DHAP) and glyceraldehyde-3-phosphate (GA3P) to fructose-1,6-bisphosphate (FBP), and the dephosphorylation of FBP to fructose-6-phosphate (F6P). The protein is Fructose-1,6-bisphosphate aldolase/phosphatase of Ignicoccus hospitalis (strain KIN4/I / DSM 18386 / JCM 14125).